The following is a 371-amino-acid chain: Neutral protease 2 homolog MGYG_03465 (371 aa).

The first 19 residues, 1 to 19 (MQFVAVLAALGALVAPAAA), serve as a signal peptide directing secretion. Positions 20–188 (YPHAPMNETL…SIHARALEKR (169 aa)) are excised as a propeptide. Disulfide bonds link C196–C267 and C274–C292. A Zn(2+)-binding site is contributed by H316. Residue E317 is part of the active site. Residues H320 and D331 each coordinate Zn(2+).

It belongs to the peptidase M35 family. Requires Zn(2+) as cofactor.

It is found in the secreted. It catalyses the reaction Preferential cleavage of bonds with hydrophobic residues in P1'. Also 3-Asn-|-Gln-4 and 8-Gly-|-Ser-9 bonds in insulin B chain.. In terms of biological role, secreted metalloproteinase that allows assimilation of proteinaceous substrates. Shows high activities on basic nuclear substrates such as histone and protamine. May be involved in virulence. The chain is Neutral protease 2 homolog MGYG_03465 from Arthroderma gypseum (strain ATCC MYA-4604 / CBS 118893) (Microsporum gypseum).